A 157-amino-acid polypeptide reads, in one-letter code: Small ribosomal subunit protein uS7 (157 aa).

Belongs to the universal ribosomal protein uS7 family. Part of the 30S ribosomal subunit. Contacts proteins S9 and S11.

One of the primary rRNA binding proteins, it binds directly to 16S rRNA where it nucleates assembly of the head domain of the 30S subunit. Is located at the subunit interface close to the decoding center, probably blocks exit of the E-site tRNA. The protein is Small ribosomal subunit protein uS7 of Phenylobacterium zucineum (strain HLK1).